The following is a 158-amino-acid chain: 2-C-methyl-D-erythritol 2,4-cyclodiphosphate synthase (158 aa).

The a divalent metal cation site is built by Asp-9 and His-11. Residues 9-11 and 35-36 each bind 4-CDP-2-C-methyl-D-erythritol 2-phosphate; these read DVH and HS. Residue His-43 coordinates a divalent metal cation. Residues 57–59, 62–66, 133–136, Phe-140, and Arg-143 each bind 4-CDP-2-C-methyl-D-erythritol 2-phosphate; these read DIG, FPDTD, and TTTE.

The protein belongs to the IspF family. As to quaternary structure, homotrimer. It depends on a divalent metal cation as a cofactor.

It catalyses the reaction 4-CDP-2-C-methyl-D-erythritol 2-phosphate = 2-C-methyl-D-erythritol 2,4-cyclic diphosphate + CMP. The protein operates within isoprenoid biosynthesis; isopentenyl diphosphate biosynthesis via DXP pathway; isopentenyl diphosphate from 1-deoxy-D-xylulose 5-phosphate: step 4/6. Its function is as follows. Involved in the biosynthesis of isopentenyl diphosphate (IPP) and dimethylallyl diphosphate (DMAPP), two major building blocks of isoprenoid compounds. Catalyzes the conversion of 4-diphosphocytidyl-2-C-methyl-D-erythritol 2-phosphate (CDP-ME2P) to 2-C-methyl-D-erythritol 2,4-cyclodiphosphate (ME-CPP) with a corresponding release of cytidine 5-monophosphate (CMP). The chain is 2-C-methyl-D-erythritol 2,4-cyclodiphosphate synthase from Geobacillus kaustophilus (strain HTA426).